The following is a 153-amino-acid chain: Deoxyuridine 5'-triphosphate nucleotidohydrolase (153 aa).

Substrate contacts are provided by residues 71-73 (RSG), Asn-84, 88-90 (TID), and Lys-98.

The protein belongs to the dUTPase family. The cofactor is Mg(2+).

The catalysed reaction is dUTP + H2O = dUMP + diphosphate + H(+). It participates in pyrimidine metabolism; dUMP biosynthesis; dUMP from dCTP (dUTP route): step 2/2. Its function is as follows. This enzyme is involved in nucleotide metabolism: it produces dUMP, the immediate precursor of thymidine nucleotides and it decreases the intracellular concentration of dUTP so that uracil cannot be incorporated into DNA. This chain is Deoxyuridine 5'-triphosphate nucleotidohydrolase, found in Wolbachia pipientis subsp. Culex pipiens (strain wPip).